The primary structure comprises 316 residues: WSCD family member GA21586 (316 aa).

Residues 8 to 28 form a helical membrane-spanning segment; the sequence is FFGVSATIIIYIGGVLFLSMN. 4 N-linked (GlcNAc...) asparagine glycosylation sites follow: Asn78, Asn150, Asn226, and Asn232.

Belongs to the WSCD family.

The protein resides in the membrane. The chain is WSCD family member GA21586 from Drosophila pseudoobscura pseudoobscura (Fruit fly).